Here is a 298-residue protein sequence, read N- to C-terminus: N-acetylmuramic acid 6-phosphate etherase (298 aa).

One can recognise an SIS domain in the interval 55–218; it reads AANRYKKGGR…STGVMIRQGK (164 aa). E83 serves as the catalytic Proton donor. The active site involves E114.

It belongs to the GCKR-like family. MurNAc-6-P etherase subfamily. Homodimer.

It carries out the reaction N-acetyl-D-muramate 6-phosphate + H2O = N-acetyl-D-glucosamine 6-phosphate + (R)-lactate. The protein operates within amino-sugar metabolism; N-acetylmuramate degradation. Its function is as follows. Specifically catalyzes the cleavage of the D-lactyl ether substituent of MurNAc 6-phosphate, producing GlcNAc 6-phosphate and D-lactate. The sequence is that of N-acetylmuramic acid 6-phosphate etherase from Lactobacillus acidophilus (strain ATCC 700396 / NCK56 / N2 / NCFM).